The sequence spans 469 residues: 3-isopropylmalate dehydratase large subunit (469 aa).

Residues C347, C407, and C410 each contribute to the [4Fe-4S] cluster site.

Belongs to the aconitase/IPM isomerase family. LeuC type 1 subfamily. Heterodimer of LeuC and LeuD. The cofactor is [4Fe-4S] cluster.

It catalyses the reaction (2R,3S)-3-isopropylmalate = (2S)-2-isopropylmalate. Its pathway is amino-acid biosynthesis; L-leucine biosynthesis; L-leucine from 3-methyl-2-oxobutanoate: step 2/4. Catalyzes the isomerization between 2-isopropylmalate and 3-isopropylmalate, via the formation of 2-isopropylmaleate. The polypeptide is 3-isopropylmalate dehydratase large subunit (Prochlorococcus marinus (strain NATL1A)).